The chain runs to 192 residues: Ion-translocating oxidoreductase complex subunit B (192 aa).

Residues 1–26 are hydrophobic; the sequence is MNTIWIAVGALTLLGLVFGAILGYAS. A 4Fe-4S domain is found at 32–91; the sequence is EDDPVVEKIDAILPQSQCGQCGYPGCRPYAEAVGLQGEKINRCAPGGEAVMLKIAELLNV. [4Fe-4S] cluster is bound by residues Cys-49, Cys-52, Cys-57, Cys-74, Cys-117, Cys-120, Cys-123, Cys-127, Cys-147, Cys-150, Cys-153, and Cys-157. 4Fe-4S ferredoxin-type domains lie at 108 to 137 and 138 to 167; these read MLAVIDENNCIGCTKCIQACPVDAIVGATR and AMHTVMSDLCTGCNLCVDPCPTHCIELRPV.

This sequence belongs to the 4Fe4S bacterial-type ferredoxin family. RnfB subfamily. As to quaternary structure, the complex is composed of six subunits: RsxA, RsxB, RsxC, RsxD, RsxE and RsxG. The cofactor is [4Fe-4S] cluster.

The protein resides in the cell inner membrane. Its function is as follows. Part of a membrane-bound complex that couples electron transfer with translocation of ions across the membrane. Required to maintain the reduced state of SoxR. This Salmonella dublin (strain CT_02021853) protein is Ion-translocating oxidoreductase complex subunit B.